The chain runs to 767 residues: Photosystem I P700 chlorophyll a apoprotein A1 (767 aa).

8 consecutive transmembrane segments (helical) span residues 72–95, 158–181, 197–221, 305–323, 364–387, 403–429, 451–473, and 548–566; these read IFSA…FHGA, LMSL…FHYH, LNHH…HVSL, IAHH…GHMY, WHAQ…QHMY, IGLF…IAMI, AIIS…LYVH, and FMVH…LILL. [4Fe-4S] cluster-binding residues include C590 and C599. 2 helical membrane-spanning segments follow: residues 606-627 and 681-703; these read HVFL…HFSW and TSAY…MFLF. A chlorophyll a'-binding site is contributed by H692. Positions 700 and 708 each coordinate chlorophyll a. W709 contributes to the phylloquinone binding site. Residues 741-761 form a helical membrane-spanning segment; the sequence is AVGVAHYLLGGIATTWAFFHA.

Belongs to the PsaA/PsaB family. As to quaternary structure, the PsaA/B heterodimer binds the P700 chlorophyll special pair and subsequent electron acceptors. PSI consists of a core antenna complex that captures photons, and an electron transfer chain that converts photonic excitation into a charge separation. The cyanobacterial PSI reaction center is composed of one copy each of PsaA,B,C,D,E,F,I,J,K,L,M and X, and forms trimeric complexes. PSI electron transfer chain: 5 chlorophyll a, 1 chlorophyll a', 2 phylloquinones and 3 4Fe-4S clusters. PSI core antenna: 90 chlorophyll a, 22 carotenoids, 3 phospholipids and 1 galactolipid. P700 is a chlorophyll a/chlorophyll a' dimer, A0 is one or more chlorophyll a, A1 is one or both phylloquinones and FX is a shared 4Fe-4S iron-sulfur center. serves as cofactor.

It localises to the cellular thylakoid membrane. The enzyme catalyses reduced [plastocyanin] + hnu + oxidized [2Fe-2S]-[ferredoxin] = oxidized [plastocyanin] + reduced [2Fe-2S]-[ferredoxin]. Functionally, psaA and PsaB bind P700, the primary electron donor of photosystem I (PSI), as well as the electron acceptors A0, A1 and FX. PSI is a plastocyanin/cytochrome c6-ferredoxin oxidoreductase, converting photonic excitation into a charge separation, which transfers an electron from the donor P700 chlorophyll pair to the spectroscopically characterized acceptors A0, A1, FX, FA and FB in turn. Oxidized P700 is reduced on the lumenal side of the thylakoid membrane by plastocyanin or cytochrome c6. The chain is Photosystem I P700 chlorophyll a apoprotein A1 from Synechococcus sp. (strain CC9311).